We begin with the raw amino-acid sequence, 569 residues long: Protein THEMIS3 (569 aa).

CABIT regions lie at residues 1–254 and 255–523; these read MEQT…ARLD and RKPR…EERS.

This sequence belongs to the themis family. In terms of tissue distribution, specifically expressed in the intestine.

In Mus musculus (Mouse), this protein is Protein THEMIS3 (Themis3).